The following is a 488-amino-acid chain: ATP synthase subunit beta (488 aa).

An ATP-binding site is contributed by G155 to T162. A disordered region spans residues G467–N488.

It belongs to the ATPase alpha/beta chains family. In terms of assembly, F-type ATPases have 2 components, CF(1) - the catalytic core - and CF(0) - the membrane proton channel. CF(1) has five subunits: alpha(3), beta(3), gamma(1), delta(1), epsilon(1). CF(0) has three main subunits: a(1), b(2) and c(9-12). The alpha and beta chains form an alternating ring which encloses part of the gamma chain. CF(1) is attached to CF(0) by a central stalk formed by the gamma and epsilon chains, while a peripheral stalk is formed by the delta and b chains.

Its subcellular location is the cell membrane. The catalysed reaction is ATP + H2O + 4 H(+)(in) = ADP + phosphate + 5 H(+)(out). Its function is as follows. Produces ATP from ADP in the presence of a proton gradient across the membrane. The catalytic sites are hosted primarily by the beta subunits. The chain is ATP synthase subunit beta from Lacticaseibacillus casei (strain BL23) (Lactobacillus casei).